Reading from the N-terminus, the 493-residue chain is WAS/WASL-interacting protein family member 1 (493 aa).

Residues methionine 1–threonine 14 show a composition bias toward pro residues. The interval methionine 1–arginine 493 is disordered. Positions glutamate 21–alanine 31 are enriched in polar residues. The region spanning glycine 32–threonine 49 is the WH2 domain. The residue at position 33 (arginine 33) is an Asymmetric dimethylarginine. The interval lysine 45–lysine 48 is binds actin. Gly residues predominate over residues alanine 67–phenylalanine 105. Arginine 126 and arginine 135 each carry omega-N-methylarginine. 3 stretches are compositionally biased toward pro residues: residues phenylalanine 142–serine 155, proline 162–proline 175, and serine 183–valine 195. Serine 143 carries the post-translational modification Phosphoserine. Position 227 is a phosphoserine (serine 227). Composition is skewed to pro residues over residues phenylalanine 239 to proline 248, valine 274 to proline 290, and alanine 298 to proline 315. A phosphoserine mark is found at serine 330 and serine 340. Positions proline 336–aspartate 361 are enriched in pro residues. XRSGPXPPXP motif repeat units follow at residues glycine 342 to proline 351, glycine 364 to proline 373, and proline 400 to proline 409. Positions glycine 403–serine 424 are enriched in pro residues. The segment covering threonine 425–serine 434 has biased composition (polar residues). The segment covering alanine 470–glycine 484 has biased composition (basic and acidic residues).

Belongs to the verprolin family. In terms of assembly, binds to WAS within the N-terminal region, at a site distinct from the CDC42-binding site. Binds profilin and actin. Binds to WASL. Interacts with DBNL. Interacts with DBNL. Interacts with FNBP1L (via the SH3 domain).

The protein localises to the cytoplasmic vesicle. It is found in the cytoplasm. Its subcellular location is the cytoskeleton. The protein resides in the cell projection. It localises to the ruffle. Plays a role in the reorganization of the actin cytoskeleton. Contributes with NCK1 and GRB2 in the recruitment and activation of WASL. May participate in regulating the subcellular localization of WASL, resulting in the disassembly of stress fibers in favor of filopodia formation. Plays a role in the formation of cell ruffles. In Mus musculus (Mouse), this protein is WAS/WASL-interacting protein family member 1 (Wipf1).